The primary structure comprises 128 residues: Transcription antitermination protein NusB (128 aa).

Belongs to the NusB family.

Involved in transcription antitermination. Required for transcription of ribosomal RNA (rRNA) genes. Binds specifically to the boxA antiterminator sequence of the ribosomal RNA (rrn) operons. This chain is Transcription antitermination protein NusB, found in Staphylococcus carnosus (strain TM300).